The following is a 345-amino-acid chain: Protein RecA (345 aa).

An ATP-binding site is contributed by 65 to 72 (GPESSGKT).

This sequence belongs to the RecA family.

It is found in the cytoplasm. Its function is as follows. Can catalyze the hydrolysis of ATP in the presence of single-stranded DNA, the ATP-dependent uptake of single-stranded DNA by duplex DNA, and the ATP-dependent hybridization of homologous single-stranded DNAs. It interacts with LexA causing its activation and leading to its autocatalytic cleavage. The chain is Protein RecA from Colwellia psychrerythraea (strain 34H / ATCC BAA-681) (Vibrio psychroerythus).